The primary structure comprises 345 residues: D-apiose dehydrogenase (345 aa).

Residue 15–16 (FF) coordinates NAD(+). Mg(2+)-binding residues include Trp24, Lys25, Val27, and Ala30. Residues Asp37, Ser79, 97–98 (QK), Asn126, and 165–167 (QPY) contribute to the NAD(+) site. A substrate-binding site is contributed by Lys98. Positions 165, 178, 182, and 232 each coordinate substrate.

This sequence belongs to the Gfo/Idh/MocA family.

It catalyses the reaction D-apiofuranose + NAD(+) = D-apionolactone + NADH + H(+). The protein operates within carbohydrate metabolism. Involved in catabolism of D-apiose. Catalyzes oxidation of D-apiose to D-apionolactone. The chain is D-apiose dehydrogenase from Rhizobium rhizogenes (strain K84 / ATCC BAA-868) (Agrobacterium radiobacter).